A 231-amino-acid polypeptide reads, in one-letter code: Sensory transduction protein BceR (231 aa).

The Response regulatory domain maps to 3–116 (KIMLIEDDHT…VLVAKIQAIL (114 aa)). Aspartate 52 bears the 4-aspartylphosphate mark. The ompR/PhoB-type DNA-binding region spans 127–225 (TQLKTWCGAT…KVGQGYMAKE (99 aa)).

In terms of processing, phosphorylated by BceS.

It localises to the cytoplasm. Member of the two-component regulatory system BceS/BceR involved in the regulation of bacitracin resistance. When activated by BceS, binds to the upstream region of the bceAB promoter and up-regulates the expression of these two genes. The chain is Sensory transduction protein BceR (bceR) from Halalkalibacterium halodurans (strain ATCC BAA-125 / DSM 18197 / FERM 7344 / JCM 9153 / C-125) (Bacillus halodurans).